A 175-amino-acid chain; its full sequence is Adenine phosphoribosyltransferase (175 aa).

Belongs to the purine/pyrimidine phosphoribosyltransferase family. As to quaternary structure, homodimer.

Its subcellular location is the cytoplasm. The catalysed reaction is AMP + diphosphate = 5-phospho-alpha-D-ribose 1-diphosphate + adenine. Its pathway is purine metabolism; AMP biosynthesis via salvage pathway; AMP from adenine: step 1/1. Its function is as follows. Catalyzes a salvage reaction resulting in the formation of AMP, that is energically less costly than de novo synthesis. This is Adenine phosphoribosyltransferase from Caldicellulosiruptor saccharolyticus (strain ATCC 43494 / DSM 8903 / Tp8T 6331).